The primary structure comprises 147 residues: Globin (147 aa).

Residues 1-147 (GLSAEQKTAL…LLGVLIENHQ (147 aa)) enclose the Globin domain. Residues His66 and His98 each coordinate heme b.

The protein belongs to the globin family. Homodimer.

The polypeptide is Globin (Tritia mutabilis (Sea snail)).